Consider the following 187-residue polypeptide: Elongation factor P (187 aa).

Belongs to the elongation factor P family.

The protein resides in the cytoplasm. It participates in protein biosynthesis; polypeptide chain elongation. In terms of biological role, involved in peptide bond synthesis. Stimulates efficient translation and peptide-bond synthesis on native or reconstituted 70S ribosomes in vitro. Probably functions indirectly by altering the affinity of the ribosome for aminoacyl-tRNA, thus increasing their reactivity as acceptors for peptidyl transferase. The protein is Elongation factor P of Gloeobacter violaceus (strain ATCC 29082 / PCC 7421).